Here is a 479-residue protein sequence, read N- to C-terminus: Aspartyl/glutamyl-tRNA(Asn/Gln) amidotransferase subunit B (479 aa).

This sequence belongs to the GatB/GatE family. GatB subfamily. Heterotrimer of A, B and C subunits.

The enzyme catalyses L-glutamyl-tRNA(Gln) + L-glutamine + ATP + H2O = L-glutaminyl-tRNA(Gln) + L-glutamate + ADP + phosphate + H(+). It catalyses the reaction L-aspartyl-tRNA(Asn) + L-glutamine + ATP + H2O = L-asparaginyl-tRNA(Asn) + L-glutamate + ADP + phosphate + 2 H(+). In terms of biological role, allows the formation of correctly charged Asn-tRNA(Asn) or Gln-tRNA(Gln) through the transamidation of misacylated Asp-tRNA(Asn) or Glu-tRNA(Gln) in organisms which lack either or both of asparaginyl-tRNA or glutaminyl-tRNA synthetases. The reaction takes place in the presence of glutamine and ATP through an activated phospho-Asp-tRNA(Asn) or phospho-Glu-tRNA(Gln). The polypeptide is Aspartyl/glutamyl-tRNA(Asn/Gln) amidotransferase subunit B (Geotalea daltonii (strain DSM 22248 / JCM 15807 / FRC-32) (Geobacter daltonii)).